Reading from the N-terminus, the 2359-residue chain is Nonribosomal peptide synthetase anaPS (2359 aa).

Residues 239 to 633 (RNATVHGDTL…VRRKDNQVKI (395 aa)) are adenylation 1. Residues 770–846 (AAQGKGEEAI…ELASAANLSN (77 aa)) enclose the Carrier 1 domain. O-(pantetheine 4'-phosphoryl)serine is present on Ser-807. The condensation 1 stretch occupies residues 883 to 1292 (EDIYPSTALQ…VGDLPRMSRQ (410 aa)). The adenylation 2 stretch occupies residues 1321–1709 (LEYPNACAVS…GRKDSQIKIR (389 aa)). One can recognise a Carrier 2 domain in the interval 1842–1918 (APSNSVEQDL…AIANKIGVVS (77 aa)). The residue at position 1879 (Ser-1879) is an O-(pantetheine 4'-phosphoryl)serine. The interval 1936–2356 (LTPIQEFFFE…LVKCLEDLAS (421 aa)) is condensation 2.

This sequence belongs to the NRP synthetase family.

It catalyses the reaction anthranilate + L-tryptophan + 2 ATP = (R)-benzodiazepinedione + 2 AMP + 2 diphosphate + H(+). Its pathway is alkaloid biosynthesis. Nonribosomal peptide synthetase; part of the gene cluster that mediates the biosynthesis of the prenylated pyrroloindoline diketopiperazine acetylaszonalenin. The first step in the pathway is the formation of (R)-benzodiazepinedione by condensation of tryptophan and anthranilic acid catalyzed by the non-ribosomal peptide synthetase anaPS. The prenyltransferase anaPT then converts (R)-benzodiazepinedione to aszonalenin in the presence of dimethylallyl diphosphate (DMAPP) via C3-prenylation. The last step in the biosynthesis of acetylaszonalenin via acetylation of aszonalenin at position N1 catalyzed by anaAT. The chain is Nonribosomal peptide synthetase anaPS from Neosartorya fischeri (strain ATCC 1020 / DSM 3700 / CBS 544.65 / FGSC A1164 / JCM 1740 / NRRL 181 / WB 181) (Aspergillus fischerianus).